Reading from the N-terminus, the 1404-residue chain is DNA-directed RNA polymerase subunit beta' (1404 aa).

Positions 70, 72, 85, and 88 each coordinate Zn(2+). Mg(2+)-binding residues include D460, D462, and D464. 4 residues coordinate Zn(2+): C825, C899, C906, and C909.

Belongs to the RNA polymerase beta' chain family. As to quaternary structure, the RNAP catalytic core consists of 2 alpha, 1 beta, 1 beta' and 1 omega subunit. When a sigma factor is associated with the core the holoenzyme is formed, which can initiate transcription. Mg(2+) is required as a cofactor. Zn(2+) serves as cofactor.

It catalyses the reaction RNA(n) + a ribonucleoside 5'-triphosphate = RNA(n+1) + diphosphate. DNA-dependent RNA polymerase catalyzes the transcription of DNA into RNA using the four ribonucleoside triphosphates as substrates. This chain is DNA-directed RNA polymerase subunit beta', found in Nitrosomonas europaea (strain ATCC 19718 / CIP 103999 / KCTC 2705 / NBRC 14298).